A 205-amino-acid polypeptide reads, in one-letter code: Small ribosomal subunit protein uS4 (205 aa).

A disordered region spans residues 17–46; that stretch reads ENIWGRPKSPVNKREYGPGQHGQRRKGKLS. The region spanning 94 to 157 is the S4 RNA-binding domain; the sequence is SRLDAVVYRA…KQLVIVLESV (64 aa).

Belongs to the universal ribosomal protein uS4 family. In terms of assembly, part of the 30S ribosomal subunit. Contacts protein S5. The interaction surface between S4 and S5 is involved in control of translational fidelity.

One of the primary rRNA binding proteins, it binds directly to 16S rRNA where it nucleates assembly of the body of the 30S subunit. In terms of biological role, with S5 and S12 plays an important role in translational accuracy. The polypeptide is Small ribosomal subunit protein uS4 (Mesorhizobium japonicum (strain LMG 29417 / CECT 9101 / MAFF 303099) (Mesorhizobium loti (strain MAFF 303099))).